Consider the following 289-residue polypeptide: Eukaryotic translation initiation factor 3 subunit G (289 aa).

Residues 1–33 (MSRPTKADWADDEEFDDPSALPPQQITTNKDGT) form a disordered region. The region spanning 209–287 (ATLRVTNVSE…LILRVEFAKR (79 aa)) is the RRM domain.

The protein belongs to the eIF-3 subunit G family. Component of the eukaryotic translation initiation factor 3 (eIF-3) complex.

It localises to the cytoplasm. RNA-binding component of the eukaryotic translation initiation factor 3 (eIF-3) complex, which is involved in protein synthesis of a specialized repertoire of mRNAs and, together with other initiation factors, stimulates binding of mRNA and methionyl-tRNAi to the 40S ribosome. The eIF-3 complex specifically targets and initiates translation of a subset of mRNAs involved in cell proliferation. This subunit can bind 18S rRNA. In Emericella nidulans (strain FGSC A4 / ATCC 38163 / CBS 112.46 / NRRL 194 / M139) (Aspergillus nidulans), this protein is Eukaryotic translation initiation factor 3 subunit G (tif35).